A 501-amino-acid polypeptide reads, in one-letter code: ATP synthase subunit beta (501 aa).

Residue 153-160 (GGAGVGKT) participates in ATP binding.

Belongs to the ATPase alpha/beta chains family. As to quaternary structure, F-type ATPases have 2 components, CF(1) - the catalytic core - and CF(0) - the membrane proton channel. CF(1) has five subunits: alpha(3), beta(3), gamma(1), delta(1), epsilon(1). CF(0) has three main subunits: a(1), b(2) and c(9-12). The alpha and beta chains form an alternating ring which encloses part of the gamma chain. CF(1) is attached to CF(0) by a central stalk formed by the gamma and epsilon chains, while a peripheral stalk is formed by the delta and b chains.

It localises to the cell inner membrane. The catalysed reaction is ATP + H2O + 4 H(+)(in) = ADP + phosphate + 5 H(+)(out). Functionally, produces ATP from ADP in the presence of a proton gradient across the membrane. The catalytic sites are hosted primarily by the beta subunits. The protein is ATP synthase subunit beta of Cytophaga hutchinsonii (strain ATCC 33406 / DSM 1761 / CIP 103989 / NBRC 15051 / NCIMB 9469 / D465).